Here is a 158-residue protein sequence, read N- to C-terminus: NAD(P)H-quinone oxidoreductase subunit J, chloroplastic (158 aa).

The protein belongs to the complex I 30 kDa subunit family. NDH is composed of at least 16 different subunits, 5 of which are encoded in the nucleus.

Its subcellular location is the plastid. It localises to the chloroplast thylakoid membrane. The catalysed reaction is a plastoquinone + NADH + (n+1) H(+)(in) = a plastoquinol + NAD(+) + n H(+)(out). It carries out the reaction a plastoquinone + NADPH + (n+1) H(+)(in) = a plastoquinol + NADP(+) + n H(+)(out). Functionally, NDH shuttles electrons from NAD(P)H:plastoquinone, via FMN and iron-sulfur (Fe-S) centers, to quinones in the photosynthetic chain and possibly in a chloroplast respiratory chain. The immediate electron acceptor for the enzyme in this species is believed to be plastoquinone. Couples the redox reaction to proton translocation, and thus conserves the redox energy in a proton gradient. The protein is NAD(P)H-quinone oxidoreductase subunit J, chloroplastic of Cryptomeria japonica (Japanese cedar).